A 350-amino-acid polypeptide reads, in one-letter code: Histidinol-phosphate aminotransferase 2 (350 aa).

K210 bears the N6-(pyridoxal phosphate)lysine mark.

This sequence belongs to the class-II pyridoxal-phosphate-dependent aminotransferase family. Histidinol-phosphate aminotransferase subfamily. As to quaternary structure, homodimer. Pyridoxal 5'-phosphate is required as a cofactor.

The catalysed reaction is L-histidinol phosphate + 2-oxoglutarate = 3-(imidazol-4-yl)-2-oxopropyl phosphate + L-glutamate. Its pathway is amino-acid biosynthesis; L-histidine biosynthesis; L-histidine from 5-phospho-alpha-D-ribose 1-diphosphate: step 7/9. The sequence is that of Histidinol-phosphate aminotransferase 2 from Mannheimia succiniciproducens (strain KCTC 0769BP / MBEL55E).